The following is a 157-amino-acid chain: Cuticle protein 19 (157 aa).

6 repeat units span residues 11 to 14 (AAPA), 18 to 21 (AAPA), 24 to 27 (AAPA), 29 to 32 (AAPA), 39 to 42 (AAPA), and 47 to 50 (AAPA). The region spanning 56 to 127 (YPKYAFEYGV…SGPSAHPAPA (72 aa)) is the Chitin-binding type R&amp;R domain. Copy 7 of the repeat occupies 141-144 (AAPA).

Its function is as follows. Component of the cuticle of migratory locust which contains more than 100 different structural proteins. The polypeptide is Cuticle protein 19 (Locusta migratoria (Migratory locust)).